The sequence spans 100 residues: Urease subunit gamma (100 aa).

It belongs to the urease gamma subunit family. In terms of assembly, heterotrimer of UreA (gamma), UreB (beta) and UreC (alpha) subunits. Three heterotrimers associate to form the active enzyme.

It localises to the cytoplasm. The enzyme catalyses urea + 2 H2O + H(+) = hydrogencarbonate + 2 NH4(+). Its pathway is nitrogen metabolism; urea degradation; CO(2) and NH(3) from urea (urease route): step 1/1. The chain is Urease subunit gamma from Citrobacter koseri (strain ATCC BAA-895 / CDC 4225-83 / SGSC4696).